A 389-amino-acid chain; its full sequence is Leucine aminopeptidase 1 (389 aa).

The signal sequence occupies residues 1 to 18; it reads MKSSVLLSLCTAALVAGA. Positions 19–89 are excised as a propeptide; that stretch reads AHPLEPQVVL…INANRLIEKS (71 aa). N-linked (GlcNAc...) asparagine glycosylation is found at Asn99, Asn156, and Asn180. His188, Asp207, Glu246, and Asp273 together coordinate Zn(2+). A disulfide bond links Cys322 and Cys326. A Zn(2+)-binding site is contributed by His355.

The protein belongs to the peptidase M28 family. M28E subfamily. Monomer. Zn(2+) serves as cofactor.

The protein resides in the secreted. In terms of biological role, extracellular aminopeptidase that allows assimilation of proteinaceous substrates. The sequence is that of Leucine aminopeptidase 1 (LAP1) from Phaeosphaeria nodorum (strain SN15 / ATCC MYA-4574 / FGSC 10173) (Glume blotch fungus).